The primary structure comprises 146 residues: Ecotin-like protein 1 (146 aa).

The protein belongs to the protease inhibitor I11 (ecotin) family.

In Leishmania infantum, this protein is Ecotin-like protein 1 (ISP1).